Here is a 247-residue protein sequence, read N- to C-terminus: 5'-nucleotidase SurE (247 aa).

A divalent metal cation is bound by residues aspartate 8, aspartate 9, serine 39, and asparagine 91.

This sequence belongs to the SurE nucleotidase family. It depends on a divalent metal cation as a cofactor.

It is found in the cytoplasm. It carries out the reaction a ribonucleoside 5'-phosphate + H2O = a ribonucleoside + phosphate. Functionally, nucleotidase that shows phosphatase activity on nucleoside 5'-monophosphates. The polypeptide is 5'-nucleotidase SurE (Leptospira biflexa serovar Patoc (strain Patoc 1 / Ames)).